The following is a 270-amino-acid chain: NAD kinase (270 aa).

Residue Asp49 is the Proton acceptor of the active site. NAD(+) is bound by residues 49–50 (DG), Arg54, 126–127 (NE), Arg152, Asp154, 165–170 (TAYNKS), Ala189, and Gln227.

This sequence belongs to the NAD kinase family. A divalent metal cation is required as a cofactor.

It is found in the cytoplasm. The enzyme catalyses NAD(+) + ATP = ADP + NADP(+) + H(+). Functionally, involved in the regulation of the intracellular balance of NAD and NADP, and is a key enzyme in the biosynthesis of NADP. Catalyzes specifically the phosphorylation on 2'-hydroxyl of the adenosine moiety of NAD to yield NADP. This Lactococcus lactis subsp. cremoris (strain MG1363) protein is NAD kinase.